The primary structure comprises 20 residues: Phospholipase A2 II-5b (20 aa).

This sequence belongs to the phospholipase A2 family. Group I subfamily. Ca(2+) is required as a cofactor. In terms of tissue distribution, expressed by the venom gland.

It is found in the secreted. The enzyme catalyses a 1,2-diacyl-sn-glycero-3-phosphocholine + H2O = a 1-acyl-sn-glycero-3-phosphocholine + a fatty acid + H(+). Its function is as follows. Snake venom phospholipase A2 (PLA2) that exhibits weak enzymatic activity. PLA2 catalyzes the calcium-dependent hydrolysis of the 2-acyl groups in 3-sn-phosphoglycerides. This is Phospholipase A2 II-5b from Notechis scutatus scutatus (Mainland tiger snake).